Reading from the N-terminus, the 777-residue chain is MDRVLSRADKERLLELLKLPRQLWGDFGRMQQAYKQQSLLLHPDKGGSHALMQELNSLWGTFKTEVYNLRMNLGGTGFQNAERGTEESGHSPLHDDYWSFSYGSKYFTREWNDFFRKWDPSYQSPPKTAESSEQPDLFCYEEPLLSPNPSPPTDTPAHPAGRRRNPCVAEPDDSISPDPPRTPVSRKRPRPAGATGGGGGGVHANGGSVFGHPTGGTSTPAHPPPYHSQGGSESMGGSDSSGFAEGSFRSDPRGESENESYSQSCSQSSFNATPPKKAREDPAPSDFPSSLTGYLSHAIYSNKTFPAFLVYSTKEKCKQLYDTIGKFRPEFKCLVHYEEGGMLFFLTMTKHRVSAVKNYCSKLCSVSFLMCKAVTKPMECYQVVTAAPFQLITENKPGLHQFEFTDEPEEQKAVDWIMVADFALENNLDDPLLIMGYYLDFAKEVPSCIKCSKEETRLQIHWKNHRKHAENADLFLNCKAQKTICQQAADGVLASRRLKLVECTRSQLLKERLQQSLLRLKELGSSDALLYLAGVAWYQCLLEDFPQTLFKMLKLLTENVPKRRNILFRGPVNSGKTGLAAALISLLGGKSLNINCPADKLAFELGVAQDQFVVCFEDVKGQIALNKQLQPGMGVANLDNLRDYLDGSVKVNLEKKHSNKRSQLFPPCVCTMNEYLLPQTVWARFHMVLDFTCKPHLAQALEKCEFLQRERIIQSGDTLALLLIWNFTSDVFDPDIQGLVKEVRDQFAAECSYSLFCDILCNVQEGDDPLKDICEYS.

N-acetylmethionine; by host is present on Met-1. Positions 12 to 75 constitute a J domain; that stretch reads RLLELLKLPR…VYNLRMNLGG (64 aa). The LXCXE motif motif lies at 137-141; it reads LFCYE. The interval 140–287 is disordered; it reads YEEPLLSPNP…AREDPAPSDF (148 aa). Residues 194–204 are compositionally biased toward gly residues; the sequence is ATGGGGGGVHA. Low complexity-rich tracts occupy residues 228–242 and 259–269; these read SQGG…DSSG and ESYSQSCSQSS. Phosphothreonine; by host is present on Thr-273. The Nuclear localization signal motif lies at 274 to 281; it reads PPKKARED. The T-ag OBD DNA-binding region spans 288 to 402; sequence PSSLTGYLSH…TENKPGLHQF (115 aa). A T-ag D1-type zinc finger spans residues 411 to 505; sequence QKAVDWIMVA…RRLKLVECTR (95 aa). Cys-448, Cys-451, His-461, and His-465 together coordinate Zn(2+). In terms of domain architecture, SF3 helicase spans 544 to 704; it reads DFPQTLFKML…PHLAQALEKC (161 aa). 570–577 is a binding site for ATP; the sequence is GPVNSGKT.

In terms of assembly, forms homohexamers in the presence of ATP. Interacts with host HDAC1. Interacts (via LXCXE domain) with host RB1; the interaction induces the aberrant dissociation of RB1-E2F1 complex thereby disrupting RB1's activity. Interacts (via LXCXE domain) with host pRB-related proteins RBL1 and RBL2. Interacts (via C-terminus) with host TOP1 and POLA1 allowing DNA replication. Interacts with host preinitiation complex components TBP, TFIIA and TFIID to regulate transcription initiation. Requires Mg(2+) as cofactor. Phosphorylated on both serine and threonine residues. Small t antigen inhibits the dephosphorylation by the AC form of PP2A. In terms of processing, O-Glycosylated near the C-terminal region. Post-translationally, acetylated by CBP in a TP53-dependent manner.

Its subcellular location is the host nucleus. The catalysed reaction is Couples ATP hydrolysis with the unwinding of duplex DNA by translocating in the 3'-5' direction.. It catalyses the reaction ATP + H2O = ADP + phosphate + H(+). Its function is as follows. Isoform large T antigen is a key early protein essential for both driving viral replication and inducing cellular transformation. Plays a role in viral genome replication by driving entry of quiescent cells into the cell cycle and by autoregulating the synthesis of viral early mRNA. Displays highly oncogenic activities by corrupting the host cellular checkpoint mechanisms that guard cell division and the transcription, replication, and repair of DNA. Participates in the modulation of cellular gene expression preceeding viral DNA replication. This step involves binding to host key cell cycle regulators retinoblastoma protein RB1/pRb and TP53. Induces the disassembly of host E2F1 transcription factors from RB1, thus promoting transcriptional activation of E2F1-regulated S-phase genes. Inhibits host TP53 binding to DNA, abrogating the ability of TP53 to stimulate gene expression. Plays the role of a TFIID-associated factor (TAF) in transcription initiation for all three RNA polymerases, by stabilizing the TBP-TFIIA complex on promoters. Initiates viral DNA replication and unwinding via interactions with the viral origin of replication. Binds two adjacent sites in the SV40 origin. The replication fork movement is facilitated by Large T antigen helicase activity. Has processive 3'-5' DNA helicase activity which requires a short 3' single-stranded region and ATP. Activates the transcription of viral late mRNA, through host TBP and TFIIA stabilization. Interferes with histone deacetylation mediated by HDAC1, leading to activation of transcription. The polypeptide is Large T antigen (Murine polyomavirus (strain Crawford small-plaque) (MPyV)).